Consider the following 311-residue polypeptide: 26S proteasome regulatory subunit RPN11 (311 aa).

The region spanning 32–167 is the MPN domain; it reads VYISSLALLK…IDAFRLISPA (136 aa). Histidine 114, histidine 116, and aspartate 127 together coordinate Zn(2+). The JAMM motif motif lies at 114–127; it reads HSHPGFGCWLSSVD.

This sequence belongs to the peptidase M67A family.

Its function is as follows. Acts as a regulatory subunit of the 26 proteasome which is involved in the ATP-dependent degradation of ubiquitinated proteins. The chain is 26S proteasome regulatory subunit RPN11 (RPN11) from Eremothecium gossypii (strain ATCC 10895 / CBS 109.51 / FGSC 9923 / NRRL Y-1056) (Yeast).